The sequence spans 277 residues: MTKPTSTADKSLLGQTTPYCQAYDPTILFPIPRQEKRDELGFDLKTLPFTGEDVWTGYEISWLNLKGKPQVGWAEFVFSAEAPNLIESKSFKLYLNSFNGTRFESEDAVIACWQNDLSQACGKPVGVRFYRLDESIVLQGNLPGHCLDALDIEVEDYQVNPDLLHTDSDQIVSETLNSHLLKSNCLVTGQPDWGSIVVRYEGAQINHEALLKYLISFREHNEFHEQCVERVFTDIMRFCQPKKLTVYARYLRRGGLDINPYRSNYEQVFDRARLVRQ.

I86–S88 contacts substrate. Residue S88 to K89 participates in NADPH binding. Residue C185 is the Thioimide intermediate of the active site. The active-site Proton donor is D192. Residue H224–E225 coordinates substrate. NADPH is bound at residue R253–G254.

Belongs to the GTP cyclohydrolase I family. QueF type 2 subfamily. Homodimer.

It is found in the cytoplasm. It carries out the reaction 7-aminomethyl-7-carbaguanine + 2 NADP(+) = 7-cyano-7-deazaguanine + 2 NADPH + 3 H(+). It functions in the pathway tRNA modification; tRNA-queuosine biosynthesis. Functionally, catalyzes the NADPH-dependent reduction of 7-cyano-7-deazaguanine (preQ0) to 7-aminomethyl-7-deazaguanine (preQ1). This Hydrogenovibrio crunogenus (strain DSM 25203 / XCL-2) (Thiomicrospira crunogena) protein is NADPH-dependent 7-cyano-7-deazaguanine reductase.